Consider the following 78-residue polypeptide: Acyl carrier protein BQ2027_MB0103 (78 aa).

The Carrier domain occupies 1–78 (MRDRILAAVC…ELEAVCTEFG (78 aa)). Ser35 carries the O-(pantetheine 4'-phosphoryl)serine modification.

The protein belongs to the acyl carrier protein (ACP) family. Pantetheine 4'-phosphate is required as a cofactor.

Its pathway is lipid metabolism; fatty acid metabolism. Acyl-carrier protein (ACP) involved in the biosynthesis of a unique class of isonitrile lipopeptides (INLPs) that seem to play a role in metal acquisition. Is the dedicated ACP for the loading of activated acyl groups catalyzed by FadD10. The sequence is that of Acyl carrier protein BQ2027_MB0103 from Mycobacterium bovis (strain ATCC BAA-935 / AF2122/97).